A 448-amino-acid polypeptide reads, in one-letter code: NADP-specific glutamate dehydrogenase (448 aa).

Residues Lys-88, Gln-109, and Lys-112 each contribute to the substrate site. The active-site Proton donor is Lys-124. Residue Gly-163 coordinates substrate. Positions 207 and 238 each coordinate NADP(+). Ser-375 serves as a coordination point for substrate.

The protein belongs to the Glu/Leu/Phe/Val dehydrogenases family. In terms of assembly, homohexamer.

The catalysed reaction is L-glutamate + NADP(+) + H2O = 2-oxoglutarate + NH4(+) + NADPH + H(+). Its function is as follows. Catalyzes the reversible oxidative deamination of glutamate to alpha-ketoglutarate and ammonia. This is NADP-specific glutamate dehydrogenase (gdhA) from Psychrobacter sp. (strain TAD1).